We begin with the raw amino-acid sequence, 399 residues long: Enoyl-[acyl-carrier-protein] reductase [NADH] (399 aa).

NAD(+) is bound by residues 48 to 53, 74 to 75, 111 to 112, and 139 to 140; these read GASTGY, FE, DA, and LA. A substrate-binding site is contributed by Tyr-225. Tyr-235 (proton donor) is an active-site residue. NAD(+) is bound by residues Lys-244 and 273-275; that span reads VVT.

This sequence belongs to the TER reductase family. Monomer.

The enzyme catalyses a 2,3-saturated acyl-[ACP] + NAD(+) = a (2E)-enoyl-[ACP] + NADH + H(+). It participates in lipid metabolism; fatty acid biosynthesis. Functionally, involved in the final reduction of the elongation cycle of fatty acid synthesis (FAS II). Catalyzes the reduction of a carbon-carbon double bond in an enoyl moiety that is covalently linked to an acyl carrier protein (ACP). The protein is Enoyl-[acyl-carrier-protein] reductase [NADH] of Serratia proteamaculans (strain 568).